A 308-amino-acid polypeptide reads, in one-letter code: Transcriptional adapter 1-2 (308 aa).

This sequence belongs to the TADA1 family. As to quaternary structure, component of the Spt-Ada-Gcn5 acetyltransferase (SAGA) complex consisting of wda/Taf5L, Saf6, Taf9, Taf10b, Taf12, Ada1, Spt3, Spt7, Spt20, Sf3b3, Sf3b5, Nipped-A/Tra1, a histone acetyltransferase (HAT) module made up of Gcn5, Ada2b (Isoform B), Ada3 and Sgf29, and a deubiquitinase (DUB) module made up of not/nonstop, Sgf11 and e(y)2 tethered to SAGA by Atxn7. Not a component of the Ada2a-containing ATAC complex.

Its subcellular location is the nucleus. In terms of biological role, component of the transcription regulatory complex SAGA, a multiprotein complex that activates transcription by remodeling chromatin and mediating histone acetylation and deubiquitination. The SAGA complex predominantly acetylates histone H3. This chain is Transcriptional adapter 1-2, found in Drosophila melanogaster (Fruit fly).